The sequence spans 275 residues: Large ribosomal subunit protein uL2cz (275 aa).

2 disordered regions span residues 1–22 and 226–275; these read MAIH…DSQV and NPVD…RRRK.

Belongs to the universal ribosomal protein uL2 family. As to quaternary structure, part of the 50S ribosomal subunit.

It is found in the plastid. Its subcellular location is the chloroplast. The chain is Large ribosomal subunit protein uL2cz (rpl2-A) from Chloranthus spicatus (Chulantree).